Reading from the N-terminus, the 207-residue chain is Claudin-11 (207 aa).

A topological domain (cytoplasmic) is located at residue Met1. Residues 2–22 (VATCLQVVGFVTSFVGWIGVI) traverse the membrane as a helical segment. Residues 23–82 (VTTSTNDWVVTCGYTIPTCRKLDELGSKGLWADCVMATGLYHCKPLVDILILPGYVQACR) are Extracellular-facing. A helical transmembrane segment spans residues 83–103 (ALMIAASVLGLPAILLLLTVL). Residues 104–122 (PCIRMGHEPGVAKYRRAQL) lie on the Cytoplasmic side of the membrane. The helical transmembrane segment at 123-143 (AGVLLILLALCAIVATIWFPV) threads the bilayer. Over 144-157 (CAHRETTIVSFGYS) the chain is Extracellular. The helical transmembrane segment at 158-178 (LYAGWIGAVLCLVGGCVILCC) threads the bilayer. At 179 to 207 (AGDAQAFGENRFYYSSGSSSPTHAKSAHV) the chain is on the cytoplasmic side. Residues Ser193, Ser194, Ser197, and Ser198 each carry the phosphoserine modification.

Belongs to the claudin family. In terms of assembly, interacts with tetraspanin-3/TSPAN3. Interacts with OCLN.

Its subcellular location is the cell junction. The protein resides in the tight junction. It localises to the cell membrane. Its function is as follows. Plays a major role in tight junction-specific obliteration of the intercellular space, through calcium-independent cell-adhesion activity. In Macaca fascicularis (Crab-eating macaque), this protein is Claudin-11 (CLDN11).